A 653-amino-acid polypeptide reads, in one-letter code: Large subunit GTPase 1 homolog (653 aa).

Positions 1 to 47 (MGKKRGTGLGRSLQRQRGSERRGASSWLHASEVVGESGPERRSAVEQ) are disordered. A CP-type G domain is found at 155 to 439 (WRQLWRVIER…LCDCPGLVMP (285 aa)). 203–206 (NKAD) contacts GTP. A compositionally biased stretch (acidic residues) spans 248 to 275 (ADSVADDLSDSEEESSSQEEDVTAEDSA). Residues 248 to 323 (ADSVADDLSD…TCSEDEGGDK (76 aa)) are disordered. Polar residues predominate over residues 276-291 (ESTSTGSALQTENQCL). Acidic residues predominate over residues 293 to 320 (SDDDSSDEYEDCEDEEEDDWQTCSEDEG). Residues 388 to 395 (GYPNVGKS) and 432 to 435 (DCPG) contribute to the GTP site. Residues 621 to 653 (APSAGSVVGKPWKKHGNRNKKEKVRRITKHLEN) are disordered. Residues 631-653 (PWKKHGNRNKKEKVRRITKHLEN) are compositionally biased toward basic residues.

It belongs to the TRAFAC class YlqF/YawG GTPase family. LSG1 subfamily.

Its subcellular location is the cytoplasm. It localises to the endoplasmic reticulum. It is found in the nucleus. The protein resides in the cajal body. It catalyses the reaction GTP + H2O = GDP + phosphate + H(+). Functionally, GTPase required for the XPO1/CRM1-mediated nuclear export of the 60S ribosomal subunit. Probably acts by mediating the release of NMD3 from the 60S ribosomal subunit after export into the cytoplasm. Its function is as follows. Functions as a GTPase. May act by mediating the release of NMD3 from the 60S ribosomal subunit after export into the cytoplasm during the 60S ribosomal subunit maturation. The polypeptide is Large subunit GTPase 1 homolog (Gallus gallus (Chicken)).